The chain runs to 477 residues: Protoporphyrinogen oxidase (477 aa).

FAD contacts are provided by residues 9-14 (GGGISG), Trp-42, 57-60 (GPRG), Val-257, Ala-449, and 454-456 (VAV).

It belongs to the protoporphyrinogen/coproporphyrinogen oxidase family. Protoporphyrinogen oxidase subfamily. As to quaternary structure, monomer. Homodimer. FAD is required as a cofactor.

Its subcellular location is the mitochondrion inner membrane. It carries out the reaction protoporphyrinogen IX + 3 O2 = protoporphyrin IX + 3 H2O2. It participates in porphyrin-containing compound metabolism; protoporphyrin-IX biosynthesis; protoporphyrin-IX from protoporphyrinogen-IX: step 1/1. With respect to regulation, inhibited by acifluorfen. Catalyzes the 6-electron oxidation of protoporphyrinogen-IX to form protoporphyrin-IX. In Mus musculus (Mouse), this protein is Protoporphyrinogen oxidase (Ppox).